The following is a 179-amino-acid chain: Transcription initiation factor TFIID subunit 10 (179 aa).

The tract at residues 1 to 23 (MNDPEQYEPSSSTESVLMPPPAL) is disordered.

The protein belongs to the TAF10 family. Component of the TFIID basal transcription factor complex, composed of TATA-box-binding protein tbp-1, and a number of TBP-associated factors (TAFs).

The protein localises to the nucleus. In terms of biological role, the TFIID basal transcription factor complex plays a major role in the initiation of RNA polymerase II (Pol II)-dependent transcription. TFIID recognizes and binds promoters via its subunit tbp-1, a TATA-box-binding protein, and promotes assembly of the pre-initiation complex (PIC). The TFIID complex consists of tbp-1 and TBP-associated factors (TAFs), including taf-10. Essential for early embryonic development, but not required for transcription of some genes; probably acts via activating transcription initiation by RNA Pol II, as part of the TFIID complex. In Caenorhabditis elegans, this protein is Transcription initiation factor TFIID subunit 10.